The primary structure comprises 183 residues: Ribosome rescue factor SmrB (183 aa).

Residues 98 to 173 form the Smr domain; that stretch reads LDLHGLTQLQ…GDAALLVLIE (76 aa).

This sequence belongs to the SmrB family. Associates with collided ribosomes, but not with correctly translating polysomes.

Its function is as follows. Acts as a ribosome collision sensor. Detects stalled/collided disomes (pairs of ribosomes where the leading ribosome is stalled and a second ribosome has collided with it) and endonucleolytically cleaves mRNA at the 5' boundary of the stalled ribosome. Stalled/collided disomes form a new interface (primarily via the 30S subunits) that binds SmrB. Cleaved mRNA becomes available for tmRNA ligation, leading to ribosomal subunit dissociation and rescue of stalled ribosomes. The protein is Ribosome rescue factor SmrB of Escherichia coli (strain 55989 / EAEC).